The sequence spans 225 residues: MAFKDLPAHARPREKLIARGAAALADAELLALLLRTGVAGKNVLQLAQELLDHFGGLSGLLQTSAEDLKVIKGMGGDAKRAELIAVLELARRAMAERLKERTVFDSPGTVKQYLQLHIGSRPYEVFAVLFLDAQHRLIVLEELFRGTLTQTSVYPREVVTRALHHQAAAVVLSHNHPSGSIEPSRADESLTQTLRAALSLIDVRVLDHVIVSAGQSYSMAEKGLL.

The MPN domain maps to 103–225; that stretch reads VFDSPGTVKQ…SYSMAEKGLL (123 aa). Residues histidine 174, histidine 176, and aspartate 187 each contribute to the Zn(2+) site. A JAMM motif motif is present at residues 174–187; the sequence is HNHPSGSIEPSRAD.

It belongs to the UPF0758 family.

The protein is UPF0758 protein Vapar_4033 of Variovorax paradoxus (strain S110).